Here is an 807-residue protein sequence, read N- to C-terminus: Glycerol-3-phosphate acyltransferase (807 aa).

The HXXXXD motif motif lies at 308 to 313; that stretch reads CHRSHM.

The protein belongs to the GPAT/DAPAT family.

The protein resides in the cell inner membrane. The enzyme catalyses sn-glycerol 3-phosphate + an acyl-CoA = a 1-acyl-sn-glycero-3-phosphate + CoA. It functions in the pathway phospholipid metabolism; CDP-diacylglycerol biosynthesis; CDP-diacylglycerol from sn-glycerol 3-phosphate: step 1/3. The sequence is that of Glycerol-3-phosphate acyltransferase from Shewanella sp. (strain MR-4).